The following is a 459-amino-acid chain: Asparagine--tRNA ligase (459 aa).

This sequence belongs to the class-II aminoacyl-tRNA synthetase family. As to quaternary structure, homodimer.

It is found in the cytoplasm. It carries out the reaction tRNA(Asn) + L-asparagine + ATP = L-asparaginyl-tRNA(Asn) + AMP + diphosphate + H(+). In Pelobacter propionicus (strain DSM 2379 / NBRC 103807 / OttBd1), this protein is Asparagine--tRNA ligase.